Consider the following 505-residue polypeptide: ATP synthase subunit alpha (505 aa).

Residue 170–177 coordinates ATP; the sequence is GDRQTGKT.

The protein belongs to the ATPase alpha/beta chains family. F-type ATPases have 2 components, CF(1) - the catalytic core - and CF(0) - the membrane proton channel. CF(1) has five subunits: alpha(3), beta(3), gamma(1), delta(1), epsilon(1). CF(0) has four main subunits: a(1), b(1), b'(1) and c(9-12).

The protein localises to the cellular thylakoid membrane. It carries out the reaction ATP + H2O + 4 H(+)(in) = ADP + phosphate + 5 H(+)(out). Its function is as follows. Produces ATP from ADP in the presence of a proton gradient across the membrane. The alpha chain is a regulatory subunit. This chain is ATP synthase subunit alpha, found in Prochlorococcus marinus (strain MIT 9303).